Here is a 488-residue protein sequence, read N- to C-terminus: Tocopherol cyclase, chloroplastic (488 aa).

The N-terminal 76 residues, 1-76, are a transit peptide targeting the chloroplast; the sequence is MEIRSLIVSM…VPTSPNRELR (76 aa).

The protein localises to the plastid. Its subcellular location is the chloroplast. The protein resides in the plastoglobule. It catalyses the reaction delta-tocopherol = 2-methyl-6-phytyl-1,4-benzene-1,4-diol. The catalysed reaction is gamma-tocopherol = 2,3-dimethyl-6-phytylbenzene-1,4-diol. The enzyme catalyses delta-tocotrienol = 6-geranylgeranyl-2-methylbenzene-1,4-diol. It carries out the reaction gamma-tocotrienol = 6-geranylgeranyl-2,3-dimethylbenzene-1,4-diol. It functions in the pathway cofactor biosynthesis; tocopherol biosynthesis. Its function is as follows. Involved in the synthesis of both tocopherols and tocotrienols (vitamin E), which presumably protect photosynthetic complexes from oxidative stress. Catalyzes the conversion of 2-methyl-6-phytyl-1,4-hydroquinone and 2,3-dimethyl-5-phytyl-1,4-hydroquinone (DMPQ) to delta- and gamma-tocopherol respectively. Also converts 2,3-dimethyl-5-geranylgeranyl-1,4-hydroquinone (DMGQ) to gamma-tocotrienol. The sequence is that of Tocopherol cyclase, chloroplastic (VTE1) from Arabidopsis thaliana (Mouse-ear cress).